We begin with the raw amino-acid sequence, 277 residues long: Tryptophan synthase alpha chain (277 aa).

Catalysis depends on proton acceptor residues Glu-42 and Glu-53.

Belongs to the TrpA family. In terms of assembly, tetramer of two alpha and two beta chains.

It catalyses the reaction (1S,2R)-1-C-(indol-3-yl)glycerol 3-phosphate + L-serine = D-glyceraldehyde 3-phosphate + L-tryptophan + H2O. The protein operates within amino-acid biosynthesis; L-tryptophan biosynthesis; L-tryptophan from chorismate: step 5/5. Functionally, the alpha subunit is responsible for the aldol cleavage of indoleglycerol phosphate to indole and glyceraldehyde 3-phosphate. The polypeptide is Tryptophan synthase alpha chain (Natronomonas pharaonis (strain ATCC 35678 / DSM 2160 / CIP 103997 / JCM 8858 / NBRC 14720 / NCIMB 2260 / Gabara) (Halobacterium pharaonis)).